Here is an 886-residue protein sequence, read N- to C-terminus: Coatomer subunit gamma (886 aa).

5 HEAT repeats span residues 66 to 103 (VEAT…SSDE), 288 to 325 (RELT…THPM), 327 to 359 (VTNC…TGNE), 360 to 397 (SSVE…KFPL), and 472 to 509 (SDPS…MVES). The tract at residues 592 to 613 (SQPLAEKKAQGKKPTGLGAPPA) is disordered.

The protein belongs to the COPG family. In terms of assembly, oligomeric complex that consists of at least the alpha, beta, beta', gamma, delta, epsilon and zeta subunits.

Its subcellular location is the cytoplasm. It localises to the golgi apparatus membrane. It is found in the cytoplasmic vesicle. The protein localises to the COPI-coated vesicle membrane. The coatomer is a cytosolic protein complex that binds to dilysine motifs and reversibly associates with Golgi non-clathrin-coated vesicles, which further mediate biosynthetic protein transport from the ER, via the Golgi up to the trans Golgi network. Coatomer complex is required for budding from Golgi membranes, and is essential for the retrograde Golgi-to-ER transport of dilysine-tagged proteins. This Arabidopsis thaliana (Mouse-ear cress) protein is Coatomer subunit gamma.